Consider the following 418-residue polypeptide: MIFDKDDFKAYDADLWNAIAKEEERQQNNIELIASENVVSKAVMAAQGSILTNKYAEGYPGRRYYGGTDVVDVVETLAIERAKEIFGAKFANVQPHSGSQANCAAYMSLIEPGDTVMGMDLASGGHLTHGAPVSFSGQTYNFVSYSVDPKTELLDFDAILKQAQEVKPKLIVAGASAYSQIIDFSKFREIADAVGAKLMVDMAHIAGLVAAGLHPSPVPYAHITTTTTHKTLRGPRGGLILTNDEELAKKINSAIFPGIQGGPLEHVVAAKAVSFKEVLDPAFKEYAANVIKNSKAMADVFLQDPDFRIISGGTENHLFLVDVTKVVENGKVAQNLLDEVNITLNKNSIPYESLSPFKTSGIRIGAAAITARGFGEEESRKVAELIIKTLKNSENEAVLEEVRSAVKELTDAFPLYED.

(6S)-5,6,7,8-tetrahydrofolate contacts are provided by residues Leu-121 and 125–127; that span reads GHL. Lys-230 is modified (N6-(pyridoxal phosphate)lysine). Residues Glu-246 and 355-357 contribute to the (6S)-5,6,7,8-tetrahydrofolate site; that span reads SPF.

The protein belongs to the SHMT family. As to quaternary structure, homodimer. Requires pyridoxal 5'-phosphate as cofactor.

It is found in the cytoplasm. The enzyme catalyses (6R)-5,10-methylene-5,6,7,8-tetrahydrofolate + glycine + H2O = (6S)-5,6,7,8-tetrahydrofolate + L-serine. It functions in the pathway one-carbon metabolism; tetrahydrofolate interconversion. The protein operates within amino-acid biosynthesis; glycine biosynthesis; glycine from L-serine: step 1/1. In terms of biological role, catalyzes the reversible interconversion of serine and glycine with tetrahydrofolate (THF) serving as the one-carbon carrier. This reaction serves as the major source of one-carbon groups required for the biosynthesis of purines, thymidylate, methionine, and other important biomolecules. Also exhibits THF-independent aldolase activity toward beta-hydroxyamino acids, producing glycine and aldehydes, via a retro-aldol mechanism. This chain is Serine hydroxymethyltransferase, found in Streptococcus pneumoniae serotype 4 (strain ATCC BAA-334 / TIGR4).